The primary structure comprises 90 residues: Translation initiation factor IF-1 (90 aa).

The S1-like domain maps to 7-76 (KEDVIRMEGT…TRGRIVYRKK (70 aa)).

It belongs to the IF-1 family. In terms of assembly, component of the 30S ribosomal translation pre-initiation complex which assembles on the 30S ribosome in the order IF-2 and IF-3, IF-1 and N-formylmethionyl-tRNA(fMet); mRNA recruitment can occur at any time during PIC assembly.

The protein localises to the cytoplasm. In terms of biological role, one of the essential components for the initiation of protein synthesis. Stabilizes the binding of IF-2 and IF-3 on the 30S subunit to which N-formylmethionyl-tRNA(fMet) subsequently binds. Helps modulate mRNA selection, yielding the 30S pre-initiation complex (PIC). Upon addition of the 50S ribosomal subunit IF-1, IF-2 and IF-3 are released leaving the mature 70S translation initiation complex. The polypeptide is Translation initiation factor IF-1 (Fervidobacterium nodosum (strain ATCC 35602 / DSM 5306 / Rt17-B1)).